Here is a 596-residue protein sequence, read N- to C-terminus: Elongation factor 4 (596 aa).

The 182-residue stretch at 2 to 183 (KNIRNFSIIA…AIITRIPAPN (182 aa)) folds into the tr-type G domain. Residues 14–19 (DHGKST) and 130–133 (NKID) contribute to the GTP site.

The protein belongs to the TRAFAC class translation factor GTPase superfamily. Classic translation factor GTPase family. LepA subfamily.

It is found in the cell inner membrane. The catalysed reaction is GTP + H2O = GDP + phosphate + H(+). Required for accurate and efficient protein synthesis under certain stress conditions. May act as a fidelity factor of the translation reaction, by catalyzing a one-codon backward translocation of tRNAs on improperly translocated ribosomes. Back-translocation proceeds from a post-translocation (POST) complex to a pre-translocation (PRE) complex, thus giving elongation factor G a second chance to translocate the tRNAs correctly. Binds to ribosomes in a GTP-dependent manner. This Campylobacter concisus (strain 13826) protein is Elongation factor 4.